The following is a 368-amino-acid chain: 1-deoxy-D-xylulose 5-phosphate reductoisomerase (368 aa).

Residues T7, G8, S9, I10, G31, K32, N33, and N113 each contribute to the NADPH site. Position 114 (K114) interacts with 1-deoxy-D-xylulose 5-phosphate. Residue E115 coordinates NADPH. D133 provides a ligand contact to Mn(2+). 4 residues coordinate 1-deoxy-D-xylulose 5-phosphate: S134, E135, S158, and H181. E135 contacts Mn(2+). G187 provides a ligand contact to NADPH. 1-deoxy-D-xylulose 5-phosphate-binding residues include S194, N199, K200, and E203. E203 provides a ligand contact to Mn(2+).

The protein belongs to the DXR family. Requires Mg(2+) as cofactor. Mn(2+) serves as cofactor.

The enzyme catalyses 2-C-methyl-D-erythritol 4-phosphate + NADP(+) = 1-deoxy-D-xylulose 5-phosphate + NADPH + H(+). It functions in the pathway isoprenoid biosynthesis; isopentenyl diphosphate biosynthesis via DXP pathway; isopentenyl diphosphate from 1-deoxy-D-xylulose 5-phosphate: step 1/6. Catalyzes the NADPH-dependent rearrangement and reduction of 1-deoxy-D-xylulose-5-phosphate (DXP) to 2-C-methyl-D-erythritol 4-phosphate (MEP). This chain is 1-deoxy-D-xylulose 5-phosphate reductoisomerase, found in Helicobacter pylori (strain Shi470).